The chain runs to 240 residues: Eukaryotic translation initiation factor 3 subunit K (240 aa).

Residues 41–221 (YDKDIVLTIL…TIKTRNIDEK (181 aa)) form the PCI domain.

This sequence belongs to the eIF-3 subunit K family. Component of the eukaryotic translation initiation factor 3 (eIF-3) complex.

Its subcellular location is the cytoplasm. Functionally, component of the eukaryotic translation initiation factor 3 (eIF-3) complex, which is involved in protein synthesis of a specialized repertoire of mRNAs and, together with other initiation factors, stimulates binding of mRNA and methionyl-tRNAi to the 40S ribosome. The eIF-3 complex specifically targets and initiates translation of a subset of mRNAs involved in cell proliferation. In Caenorhabditis elegans, this protein is Eukaryotic translation initiation factor 3 subunit K.